The primary structure comprises 214 residues: Alpha-S1-casein (214 aa).

The N-terminal stretch at 1–15 (MKLLILTCLVAVALA) is a signal peptide. Residue Ser27 is modified to Phosphoserine; in allele A. The residue at position 56 (Ser56) is a Phosphoserine; in allele C. 2 positions are modified to phosphoserine: Ser61 and Ser63. The tract at residues 69–91 (MEDAKQMKAGSSSSSEEIVPNSA) is disordered. Ser79 carries the phosphoserine; in alleles A and C modification. The residue at position 80 (Ser80) is a Phosphoserine. Position 81 is a phosphoserine; in alleles A and C (Ser81). At Ser82 the chain carries Phosphoserine. Ser83 is subject to Phosphoserine; in alleles A and C. Residue Ser90 is modified to Phosphoserine. Residues 105 to 111 (RYLGYLE) form an opioid-like peptide sequence region. Ser130 carries the post-translational modification Phosphoserine.

It belongs to the alpha-casein family. Mammary gland specific. Secreted in milk.

Its subcellular location is the secreted. In terms of biological role, important role in the capacity of milk to transport calcium phosphate. This chain is Alpha-S1-casein (CSN1S1), found in Ovis aries (Sheep).